A 244-amino-acid polypeptide reads, in one-letter code: tRNA (guanine-N(1)-)-methyltransferase (244 aa).

Residues glycine 110 and 129–134 (IGDYIL) contribute to the S-adenosyl-L-methionine site.

The protein belongs to the RNA methyltransferase TrmD family. As to quaternary structure, homodimer.

Its subcellular location is the cytoplasm. It catalyses the reaction guanosine(37) in tRNA + S-adenosyl-L-methionine = N(1)-methylguanosine(37) in tRNA + S-adenosyl-L-homocysteine + H(+). Specifically methylates guanosine-37 in various tRNAs. This Syntrophomonas wolfei subsp. wolfei (strain DSM 2245B / Goettingen) protein is tRNA (guanine-N(1)-)-methyltransferase.